A 241-amino-acid chain; its full sequence is Probable transcriptional regulatory protein NE0210 (241 aa).

This sequence belongs to the TACO1 family.

It is found in the cytoplasm. This chain is Probable transcriptional regulatory protein NE0210, found in Nitrosomonas europaea (strain ATCC 19718 / CIP 103999 / KCTC 2705 / NBRC 14298).